The sequence spans 100 residues: Urease subunit gamma (100 aa).

It belongs to the urease gamma subunit family. Heterotrimer of UreA (gamma), UreB (beta) and UreC (alpha) subunits. Three heterotrimers associate to form the active enzyme.

It is found in the cytoplasm. The catalysed reaction is urea + 2 H2O + H(+) = hydrogencarbonate + 2 NH4(+). The protein operates within nitrogen metabolism; urea degradation; CO(2) and NH(3) from urea (urease route): step 1/1. The sequence is that of Urease subunit gamma from Roseobacter denitrificans (strain ATCC 33942 / OCh 114) (Erythrobacter sp. (strain OCh 114)).